The following is a 213-amino-acid chain: Response regulator GacA (213 aa).

A Response regulatory domain is found at 3-119 (RVLVVDDHDL…EMVQAIRLVF (117 aa)). D54 bears the 4-aspartylphosphate mark. Residues 142–207 (SDSPFDALSE…ELTLLAVRHG (66 aa)) form the HTH luxR-type domain. A DNA-binding region (H-T-H motif) is located at residues 166–185 (VQIISDKLCLSPKTVNTYRY).

Post-translationally, phosphorylated by GacS.

Functionally, member of the two-component regulatory system GacA/GacS which controls the expression of secondary metabolites and extracellular products. Acts (probably primarily) by activating expression of CsrA1 and CsrA2 antagonist small RNAs (sRNA) RsmX, RsmY and RsmZ which bind to and prevent translation repression by CsrA1 and CsrA2. Involved in the regulation of secondary metabolism and in the synthesis of the antifungal factors cyanide, 2,4-diacetylphloroglucinol and pyoluteorin. Involved in synthesis of the autoinducing signal (unrelated to N-acylhomoserine lactones, induces the Gac/Csr cascade). Exercises positive post-transcriptional control over the hcnABC and aprA genes; acts upstream of CsrA2 (rsmA). Controls expression of csrA1 (rsmE) and csrA2. This is Response regulator GacA from Pseudomonas protegens (strain DSM 19095 / LMG 27888 / CFBP 6595 / CHA0).